We begin with the raw amino-acid sequence, 232 residues long: 6-hydroxymethyl-7,8-dihydropterin pyrophosphokinase (232 aa).

Belongs to the archaeal 6-HMPDK family. Mg(2+) serves as cofactor.

The catalysed reaction is 6-hydroxymethyl-7,8-dihydropterin + ATP = (7,8-dihydropterin-6-yl)methyl diphosphate + AMP + H(+). It functions in the pathway cofactor biosynthesis; 5,6,7,8-tetrahydromethanopterin biosynthesis. Functionally, catalyzes the transfer of diphosphate from ATP to 6-hydroxymethyl-7,8-dihydropterin (6-HMD), leading to 6-hydroxymethyl-7,8-dihydropterin diphosphate (6-HMDP). The sequence is that of 6-hydroxymethyl-7,8-dihydropterin pyrophosphokinase from Methanothermobacter thermautotrophicus (strain ATCC 29096 / DSM 1053 / JCM 10044 / NBRC 100330 / Delta H) (Methanobacterium thermoautotrophicum).